Consider the following 274-residue polypeptide: Putative phosphoenolpyruvate synthase regulatory protein (274 aa).

Position 154–161 (154–161 (GVSRCGKT)) interacts with ADP.

This sequence belongs to the pyruvate, phosphate/water dikinase regulatory protein family. PSRP subfamily.

The catalysed reaction is [pyruvate, water dikinase] + ADP = [pyruvate, water dikinase]-phosphate + AMP + H(+). It catalyses the reaction [pyruvate, water dikinase]-phosphate + phosphate + H(+) = [pyruvate, water dikinase] + diphosphate. Its function is as follows. Bifunctional serine/threonine kinase and phosphorylase involved in the regulation of the phosphoenolpyruvate synthase (PEPS) by catalyzing its phosphorylation/dephosphorylation. The sequence is that of Putative phosphoenolpyruvate synthase regulatory protein from Pseudomonas aeruginosa (strain LESB58).